The following is a 176-amino-acid chain: MKDLVAKRYVKALIDGRNSESINTISNKLNQVASAFADERFNSIISSPEISDKSKVDLIISFVDGTDNSLNNFIKLLGEKRRLDLLPFIAKDLNIQLAKMNNNYIGVVYTNQELSSDYISSIEKQFSKKFDVKLSLSQNVCDYDGIKVDIDGLGVEISFSKDRLKSQLIDHILKAV.

This sequence belongs to the ATPase delta chain family. As to quaternary structure, F-type ATPases have 2 components, F(1) - the catalytic core - and F(0) - the membrane proton channel. F(1) has five subunits: alpha(3), beta(3), gamma(1), delta(1), epsilon(1). F(0) has three main subunits: a(1), b(2) and c(10-14). The alpha and beta chains form an alternating ring which encloses part of the gamma chain. F(1) is attached to F(0) by a central stalk formed by the gamma and epsilon chains, while a peripheral stalk is formed by the delta and b chains.

Its subcellular location is the cell inner membrane. In terms of biological role, f(1)F(0) ATP synthase produces ATP from ADP in the presence of a proton or sodium gradient. F-type ATPases consist of two structural domains, F(1) containing the extramembraneous catalytic core and F(0) containing the membrane proton channel, linked together by a central stalk and a peripheral stalk. During catalysis, ATP synthesis in the catalytic domain of F(1) is coupled via a rotary mechanism of the central stalk subunits to proton translocation. This protein is part of the stalk that links CF(0) to CF(1). It either transmits conformational changes from CF(0) to CF(1) or is implicated in proton conduction. The chain is ATP synthase subunit delta from Aliarcobacter butzleri (strain RM4018) (Arcobacter butzleri).